A 652-amino-acid chain; its full sequence is DNA ligase (652 aa).

NAD(+) is bound by residues 29–33 (DSEYD), 78–79 (SL), and Glu107. The active-site N6-AMP-lysine intermediate is Lys109. NAD(+) contacts are provided by Arg130, Glu164, Lys278, and Lys302. Zn(2+) is bound by residues Cys395, Cys398, Cys413, and Cys418. The 76-residue stretch at 577–652 (VADAALSGLT…VRDEAWLESL (76 aa)) folds into the BRCT domain.

This sequence belongs to the NAD-dependent DNA ligase family. LigA subfamily. The cofactor is Mg(2+). It depends on Mn(2+) as a cofactor.

It catalyses the reaction NAD(+) + (deoxyribonucleotide)n-3'-hydroxyl + 5'-phospho-(deoxyribonucleotide)m = (deoxyribonucleotide)n+m + AMP + beta-nicotinamide D-nucleotide.. DNA ligase that catalyzes the formation of phosphodiester linkages between 5'-phosphoryl and 3'-hydroxyl groups in double-stranded DNA using NAD as a coenzyme and as the energy source for the reaction. It is essential for DNA replication and repair of damaged DNA. The sequence is that of DNA ligase from Streptococcus pneumoniae serotype 2 (strain D39 / NCTC 7466).